Here is a 542-residue protein sequence, read N- to C-terminus: Chaperonin GroEL (542 aa).

ATP contacts are provided by residues 29–32 (TIGP), 86–90 (DGTTT), Gly-413, 477–479 (NAA), and Asp-493.

Belongs to the chaperonin (HSP60) family. In terms of assembly, forms a cylinder of 14 subunits composed of two heptameric rings stacked back-to-back. Interacts with the co-chaperonin GroES.

It localises to the cytoplasm. It carries out the reaction ATP + H2O + a folded polypeptide = ADP + phosphate + an unfolded polypeptide.. In terms of biological role, together with its co-chaperonin GroES, plays an essential role in assisting protein folding. The GroEL-GroES system forms a nano-cage that allows encapsulation of the non-native substrate proteins and provides a physical environment optimized to promote and accelerate protein folding. This Lactobacillus acidophilus (strain ATCC 700396 / NCK56 / N2 / NCFM) protein is Chaperonin GroEL.